A 275-amino-acid chain; its full sequence is Large ribosomal subunit protein uL2 (275 aa).

The segment at 221 to 275 (RGTAMNPVDHPHGGGEGRTGEGRVPVNPWGQPTKGYRTRSNKRTNSMIVQRRHKR) is disordered. Basic and acidic residues predominate over residues 229–241 (DHPHGGGEGRTGE).

Belongs to the universal ribosomal protein uL2 family. As to quaternary structure, part of the 50S ribosomal subunit. Forms a bridge to the 30S subunit in the 70S ribosome.

Its function is as follows. One of the primary rRNA binding proteins. Required for association of the 30S and 50S subunits to form the 70S ribosome, for tRNA binding and peptide bond formation. It has been suggested to have peptidyltransferase activity; this is somewhat controversial. Makes several contacts with the 16S rRNA in the 70S ribosome. This Dechloromonas aromatica (strain RCB) protein is Large ribosomal subunit protein uL2.